We begin with the raw amino-acid sequence, 246 residues long: E3 ubiquitin-protein ligase MARCHF2 (246 aa).

The RING-CH-type zinc-finger motif lies at 56-116 (GTQSDGPICR…ELCHTEFAVE (61 aa)). Zn(2+) contacts are provided by C64, C67, C80, C82, H90, C93, C106, and C109. Transmembrane regions (helical) follow at residues 138 to 158 (LFCD…SGWL) and 175 to 195 (AVGL…WTLV).

The protein localises to the endoplasmic reticulum membrane. The protein resides in the lysosome membrane. It is found in the endosome membrane. The catalysed reaction is S-ubiquitinyl-[E2 ubiquitin-conjugating enzyme]-L-cysteine + [acceptor protein]-L-lysine = [E2 ubiquitin-conjugating enzyme]-L-cysteine + N(6)-ubiquitinyl-[acceptor protein]-L-lysine.. The protein operates within protein modification; protein ubiquitination. E3 ubiquitin-protein ligase which may be involved in endosomal trafficking. E3 ubiquitin ligases accept ubiquitin from an E2 ubiquitin-conjugating enzyme in the form of a thioester and then directly transfer the ubiquitin to targeted substrates. This chain is E3 ubiquitin-protein ligase MARCHF2 (marchf2), found in Xenopus tropicalis (Western clawed frog).